Reading from the N-terminus, the 284-residue chain is Tropomyosin Lep s 1.0101 (284 aa).

A coiled-coil region spans residues 1 to 273 (MEAIKKKMQA…KDRYRALADE (273 aa)). Basic and acidic residues predominate over residues 155–171 (AEDADGKSDEVSRKMAQ). Residues 155 to 187 (AEDADGKSDEVSRKMAQVEDDLEVAEDRVKSGD) are disordered.

This sequence belongs to the tropomyosin family. As to quaternary structure, homodimer.

Its function is as follows. Tropomyosin, in association with the troponin complex, plays a central role in the calcium dependent regulation of muscle contraction. The chain is Tropomyosin Lep s 1.0101 from Lepisma saccharinum (Silverfish).